The following is a 473-amino-acid chain: Photosystem II CP43 reaction center protein (473 aa).

Residues 1–14 constitute a propeptide that is removed on maturation; it reads MKILYSPRRFYPVE. Thr15 is modified (N-acetylthreonine). Thr15 is subject to Phosphothreonine. A run of 5 helical transmembrane segments spans residues 69-93, 134-155, 178-200, 255-275, and 291-312; these read LFEVAHFVPEKPMYEQGLILLPHLA, IIGPETLEESFPFFGYAWKDKN, KALYFGGVYDTWAPGGGDVRKIT, KPFAWARRAFVWSGEAYLSYS, and WFNNTAYPSEFYGPTGPEASQA. Glu367 is a [CaMn4O5] cluster binding site. A helical transmembrane segment spans residues 447-471; sequence RARAAAAGFEKGIDRDFEPVLSTTP.

It belongs to the PsbB/PsbC family. PsbC subfamily. PSII is composed of 1 copy each of membrane proteins PsbA, PsbB, PsbC, PsbD, PsbE, PsbF, PsbH, PsbI, PsbJ, PsbK, PsbL, PsbM, PsbT, PsbX, PsbY, PsbZ, Psb30/Ycf12, at least 3 peripheral proteins of the oxygen-evolving complex and a large number of cofactors. It forms dimeric complexes. It depends on Binds multiple chlorophylls and provides some of the ligands for the Ca-4Mn-5O cluster of the oxygen-evolving complex. It may also provide a ligand for a Cl- that is required for oxygen evolution. PSII binds additional chlorophylls, carotenoids and specific lipids. as a cofactor.

The protein localises to the plastid. The protein resides in the chloroplast thylakoid membrane. Its function is as follows. One of the components of the core complex of photosystem II (PSII). It binds chlorophyll and helps catalyze the primary light-induced photochemical processes of PSII. PSII is a light-driven water:plastoquinone oxidoreductase, using light energy to abstract electrons from H(2)O, generating O(2) and a proton gradient subsequently used for ATP formation. This is Photosystem II CP43 reaction center protein from Huperzia lucidula (Shining clubmoss).